A 249-amino-acid polypeptide reads, in one-letter code: Aquaporin TIP4-3 (249 aa).

Transmembrane regions (helical) follow at residues 20–40 and 56–76; these read GVLG…GAAM and TAVA…GFHI. The NPA 1 signature appears at 82–84; the sequence is NPA. 3 helical membrane passes run 100 to 122, 141 to 161, and 169 to 189; these read SSLY…RWLT, GVVA…ATIL, and GAGP…GAAL. The NPA 2 signature appears at 195–197; the sequence is NPA. A helical membrane pass occupies residues 214–234; sequence VYWVGPLAGGPLAVLVYECCF.

It belongs to the MIP/aquaporin (TC 1.A.8) family. TIP (TC 1.A.8.10) subfamily.

It localises to the vacuole membrane. Aquaporins facilitate the transport of water and small neutral solutes across cell membranes. This Zea mays (Maize) protein is Aquaporin TIP4-3 (TIP4-3).